The chain runs to 119 residues: Holo-[acyl-carrier-protein] synthase (119 aa).

Residues D7 and E53 each coordinate Mg(2+).

Belongs to the P-Pant transferase superfamily. AcpS family. Mg(2+) is required as a cofactor.

The protein resides in the cytoplasm. It carries out the reaction apo-[ACP] + CoA = holo-[ACP] + adenosine 3',5'-bisphosphate + H(+). Its function is as follows. Transfers the 4'-phosphopantetheine moiety from coenzyme A to a Ser of acyl-carrier-protein. The sequence is that of Holo-[acyl-carrier-protein] synthase from Dehalococcoides mccartyi (strain CBDB1).